We begin with the raw amino-acid sequence, 535 residues long: CTP synthase (535 aa).

An amidoligase domain region spans residues 1-268; the sequence is MSTKYIFVTG…DQIVCDHLKL (268 aa). Ser-14 provides a ligand contact to CTP. Ser-14 provides a ligand contact to UTP. 15–20 lines the ATP pocket; sequence SMGKGI. Position 55 (Tyr-55) interacts with L-glutamine. Position 72 (Asp-72) interacts with ATP. The Mg(2+) site is built by Asp-72 and Glu-142. Residues 149-151, 189-194, and Lys-225 contribute to the CTP site; these read DME and KTKIAQ. UTP is bound by residues 189 to 194 and Lys-225; that span reads KTKIAQ. Positions 293-535 constitute a Glutamine amidotransferase type-1 domain; that stretch reads KIALVGKYVE…FIRVAVENSK (243 aa). Gly-355 is an L-glutamine binding site. The Nucleophile; for glutamine hydrolysis role is filled by Cys-382. L-glutamine-binding positions include 383 to 386, Glu-406, and Arg-464; that span reads LGMQ. Residues His-509 and Glu-511 contribute to the active site.

Belongs to the CTP synthase family. In terms of assembly, homotetramer.

It catalyses the reaction UTP + L-glutamine + ATP + H2O = CTP + L-glutamate + ADP + phosphate + 2 H(+). The enzyme catalyses L-glutamine + H2O = L-glutamate + NH4(+). It carries out the reaction UTP + NH4(+) + ATP = CTP + ADP + phosphate + 2 H(+). It participates in pyrimidine metabolism; CTP biosynthesis via de novo pathway; CTP from UDP: step 2/2. Its activity is regulated as follows. Allosterically activated by GTP, when glutamine is the substrate; GTP has no effect on the reaction when ammonia is the substrate. The allosteric effector GTP functions by stabilizing the protein conformation that binds the tetrahedral intermediate(s) formed during glutamine hydrolysis. Inhibited by the product CTP, via allosteric rather than competitive inhibition. Its function is as follows. Catalyzes the ATP-dependent amination of UTP to CTP with either L-glutamine or ammonia as the source of nitrogen. Regulates intracellular CTP levels through interactions with the four ribonucleotide triphosphates. This chain is CTP synthase, found in Lactococcus lactis subsp. lactis (strain IL1403) (Streptococcus lactis).